Here is a 511-residue protein sequence, read N- to C-terminus: Bifunctional purine biosynthesis protein PurH (511 aa).

Positions 1–145 constitute an MGS-like domain; sequence MKQRALVSVS…KNHKFVSVIV (145 aa).

Belongs to the PurH family.

It catalyses the reaction (6R)-10-formyltetrahydrofolate + 5-amino-1-(5-phospho-beta-D-ribosyl)imidazole-4-carboxamide = 5-formamido-1-(5-phospho-D-ribosyl)imidazole-4-carboxamide + (6S)-5,6,7,8-tetrahydrofolate. The catalysed reaction is IMP + H2O = 5-formamido-1-(5-phospho-D-ribosyl)imidazole-4-carboxamide. The protein operates within purine metabolism; IMP biosynthesis via de novo pathway; 5-formamido-1-(5-phospho-D-ribosyl)imidazole-4-carboxamide from 5-amino-1-(5-phospho-D-ribosyl)imidazole-4-carboxamide (10-formyl THF route): step 1/1. Its pathway is purine metabolism; IMP biosynthesis via de novo pathway; IMP from 5-formamido-1-(5-phospho-D-ribosyl)imidazole-4-carboxamide: step 1/1. The polypeptide is Bifunctional purine biosynthesis protein PurH (Bacillus cereus (strain AH187)).